The primary structure comprises 382 residues: V-type proton ATPase subunit C 1 (382 aa).

An N-acetylthreonine modification is found at Thr-2.

The protein belongs to the V-ATPase C subunit family. As to quaternary structure, V-ATPase is a heteromultimeric enzyme made up of two complexes: the ATP-hydrolytic V1 complex and the proton translocation V0 complex. The V1 complex consists of three catalytic AB heterodimers that form a heterohexamer, three peripheral stalks each consisting of EG heterodimers, one central rotor including subunits D and F, and the regulatory subunits C and H. The proton translocation complex V0 consists of the proton transport subunit a, a ring of proteolipid subunits c9c'', rotary subunit d, subunits e and f, and the accessory subunits ATP6AP1/Ac45 and ATP6AP2/PRR. As to expression, expressed in brain (at protein level).

It is found in the cytoplasmic vesicle. Its subcellular location is the secretory vesicle. The protein resides in the synaptic vesicle membrane. The protein localises to the clathrin-coated vesicle membrane. Subunit of the V1 complex of vacuolar(H+)-ATPase (V-ATPase), a multisubunit enzyme composed of a peripheral complex (V1) that hydrolyzes ATP and a membrane integral complex (V0) that translocates protons. V-ATPase is responsible for acidifying and maintaining the pH of intracellular compartments and in some cell types, is targeted to the plasma membrane, where it is responsible for acidifying the extracellular environment. Subunit C is necessary for the assembly of the catalytic sector of the enzyme and is likely to have a specific function in its catalytic activity. The chain is V-type proton ATPase subunit C 1 (ATP6V1C1) from Bos taurus (Bovine).